Here is a 664-residue protein sequence, read N- to C-terminus: Gametogenetin-binding protein 2 (664 aa).

Disordered regions lie at residues 375-425 and 447-476; these read QEKK…NTSE and KKGLTPHSNVSDCGYSSSLEGSEPGSQEGS. The span at 376–388 shows a compositional bias: basic residues; it reads EKKRQKKNRRKNK. The segment covering 452–475 has biased composition (polar residues); the sequence is PHSNVSDCGYSSSLEGSEPGSQEG.

It localises to the cytoplasm. Its function is as follows. May be involved in spermatogenesis. The protein is Gametogenetin-binding protein 2 (ggnbp2) of Xenopus laevis (African clawed frog).